Reading from the N-terminus, the 129-residue chain is Large ribosomal subunit protein bL12 (129 aa).

The protein belongs to the bacterial ribosomal protein bL12 family. Homodimer. Part of the ribosomal stalk of the 50S ribosomal subunit. Forms a multimeric L10(L12)X complex, where L10 forms an elongated spine to which 2 to 4 L12 dimers bind in a sequential fashion. Binds GTP-bound translation factors.

Functionally, forms part of the ribosomal stalk which helps the ribosome interact with GTP-bound translation factors. Is thus essential for accurate translation. The polypeptide is Large ribosomal subunit protein bL12 (Pelotomaculum thermopropionicum (strain DSM 13744 / JCM 10971 / SI)).